The sequence spans 422 residues: Serine hydroxymethyltransferase 2 (422 aa).

(6S)-5,6,7,8-tetrahydrofolate contacts are provided by residues Leu-121 and 125 to 127 (GHL). The residue at position 230 (Lys-230) is an N6-(pyridoxal phosphate)lysine.

This sequence belongs to the SHMT family. As to quaternary structure, homodimer. It depends on pyridoxal 5'-phosphate as a cofactor.

It is found in the cytoplasm. The catalysed reaction is (6R)-5,10-methylene-5,6,7,8-tetrahydrofolate + glycine + H2O = (6S)-5,6,7,8-tetrahydrofolate + L-serine. The protein operates within one-carbon metabolism; tetrahydrofolate interconversion. It functions in the pathway amino-acid biosynthesis; glycine biosynthesis; glycine from L-serine: step 1/1. Functionally, catalyzes the reversible interconversion of serine and glycine with tetrahydrofolate (THF) serving as the one-carbon carrier. This reaction serves as the major source of one-carbon groups required for the biosynthesis of purines, thymidylate, methionine, and other important biomolecules. Also exhibits THF-independent aldolase activity toward beta-hydroxyamino acids, producing glycine and aldehydes, via a retro-aldol mechanism. In Agrobacterium fabrum (strain C58 / ATCC 33970) (Agrobacterium tumefaciens (strain C58)), this protein is Serine hydroxymethyltransferase 2.